Reading from the N-terminus, the 236-residue chain is Pyridoxine 5'-phosphate synthase (236 aa).

Residue N6 coordinates 3-amino-2-oxopropyl phosphate. 8–9 (DH) serves as a coordination point for 1-deoxy-D-xylulose 5-phosphate. R17 provides a ligand contact to 3-amino-2-oxopropyl phosphate. H42 acts as the Proton acceptor in catalysis. 1-deoxy-D-xylulose 5-phosphate contacts are provided by R44 and H49. E69 serves as the catalytic Proton acceptor. A 1-deoxy-D-xylulose 5-phosphate-binding site is contributed by T99. The Proton donor role is filled by H190. 3-amino-2-oxopropyl phosphate is bound by residues G191 and 212-213 (GH).

Belongs to the PNP synthase family. Homooctamer; tetramer of dimers.

It is found in the cytoplasm. It catalyses the reaction 3-amino-2-oxopropyl phosphate + 1-deoxy-D-xylulose 5-phosphate = pyridoxine 5'-phosphate + phosphate + 2 H2O + H(+). It functions in the pathway cofactor biosynthesis; pyridoxine 5'-phosphate biosynthesis; pyridoxine 5'-phosphate from D-erythrose 4-phosphate: step 5/5. Its function is as follows. Catalyzes the complicated ring closure reaction between the two acyclic compounds 1-deoxy-D-xylulose-5-phosphate (DXP) and 3-amino-2-oxopropyl phosphate (1-amino-acetone-3-phosphate or AAP) to form pyridoxine 5'-phosphate (PNP) and inorganic phosphate. The polypeptide is Pyridoxine 5'-phosphate synthase (Pelodictyon phaeoclathratiforme (strain DSM 5477 / BU-1)).